The primary structure comprises 256 residues: Hydroxyacylglutathione hydrolase (256 aa).

Zn(2+) contacts are provided by histidine 54, histidine 56, aspartate 58, histidine 59, histidine 113, aspartate 136, and histidine 174.

Belongs to the metallo-beta-lactamase superfamily. Glyoxalase II family. Monomer. Zn(2+) serves as cofactor.

The catalysed reaction is an S-(2-hydroxyacyl)glutathione + H2O = a 2-hydroxy carboxylate + glutathione + H(+). Its pathway is secondary metabolite metabolism; methylglyoxal degradation; (R)-lactate from methylglyoxal: step 2/2. Thiolesterase that catalyzes the hydrolysis of S-D-lactoyl-glutathione to form glutathione and D-lactic acid. In Cyanothece sp. (strain PCC 7425 / ATCC 29141), this protein is Hydroxyacylglutathione hydrolase.